A 259-amino-acid chain; its full sequence is 5'-nucleotidase SurE (259 aa).

A divalent metal cation contacts are provided by Asp-8, Asp-9, Ser-39, and Asn-98.

The protein belongs to the SurE nucleotidase family. Requires a divalent metal cation as cofactor.

It localises to the cytoplasm. The catalysed reaction is a ribonucleoside 5'-phosphate + H2O = a ribonucleoside + phosphate. In terms of biological role, nucleotidase that shows phosphatase activity on nucleoside 5'-monophosphates. This chain is 5'-nucleotidase SurE, found in Fervidobacterium nodosum (strain ATCC 35602 / DSM 5306 / Rt17-B1).